The following is a 173-amino-acid chain: RNA pyrophosphohydrolase (173 aa).

The Nudix hydrolase domain maps to 11 to 164 (PYRRCVGVVV…KKHVYRKVVS (154 aa)). Positions 52–73 (GGIDEGEEPLDAACRELYEETG) match the Nudix box motif.

It belongs to the Nudix hydrolase family. RppH subfamily. A divalent metal cation serves as cofactor.

Accelerates the degradation of transcripts by removing pyrophosphate from the 5'-end of triphosphorylated RNA, leading to a more labile monophosphorylated state that can stimulate subsequent ribonuclease cleavage. The polypeptide is RNA pyrophosphohydrolase (Bartonella quintana (strain Toulouse) (Rochalimaea quintana)).